The chain runs to 485 residues: Cysteine--tRNA ligase (485 aa).

Cysteine 27 provides a ligand contact to Zn(2+). The 'HIGH' region motif lies at isoleucine 29–histidine 39. Residues cysteine 208, histidine 233, and glutamate 237 each coordinate Zn(2+). Positions lysine 265–serine 269 match the 'KMSKS' region motif. Position 268 (lysine 268) interacts with ATP.

Belongs to the class-I aminoacyl-tRNA synthetase family. As to quaternary structure, monomer. The cofactor is Zn(2+).

The protein resides in the cytoplasm. It catalyses the reaction tRNA(Cys) + L-cysteine + ATP = L-cysteinyl-tRNA(Cys) + AMP + diphosphate. The polypeptide is Cysteine--tRNA ligase (Oleidesulfovibrio alaskensis (strain ATCC BAA-1058 / DSM 17464 / G20) (Desulfovibrio alaskensis)).